Reading from the N-terminus, the 217-residue chain is Adenylate kinase (217 aa).

An ATP-binding site is contributed by 10–15; the sequence is GAGKGT. An NMP region spans residues 30 to 59; it reads STGDMFREAVAAGTELGVKVQNILSSGALV. Residues Thr31, Arg36, 57–59, 85–88, and Gln92 each bind AMP; these read ALV and GYPR. Residues 126 to 163 are LID; the sequence is SRRICPKCGKIYNLISMPPVSDQICDDCGEQLVIREDD. Arg127 serves as a coordination point for ATP. The Zn(2+) site is built by Cys130 and Cys133. Residue 136–137 participates in ATP binding; it reads IY. Cys150 and Cys153 together coordinate Zn(2+). Residues Arg160 and Arg171 each contribute to the AMP site. Residue Arg199 coordinates ATP.

The protein belongs to the adenylate kinase family. As to quaternary structure, monomer.

It localises to the cytoplasm. The enzyme catalyses AMP + ATP = 2 ADP. It participates in purine metabolism; AMP biosynthesis via salvage pathway; AMP from ADP: step 1/1. Catalyzes the reversible transfer of the terminal phosphate group between ATP and AMP. Plays an important role in cellular energy homeostasis and in adenine nucleotide metabolism. This is Adenylate kinase from Pseudothermotoga lettingae (strain ATCC BAA-301 / DSM 14385 / NBRC 107922 / TMO) (Thermotoga lettingae).